Reading from the N-terminus, the 1524-residue chain is DNA-directed RNA polymerase subunit beta' (1524 aa).

Zn(2+) contacts are provided by Cys-58, Cys-60, Cys-73, and Cys-76. Mg(2+) is bound by residues Asp-739, Asp-741, and Asp-743. Zn(2+) contacts are provided by Cys-1112, Cys-1194, Cys-1201, and Cys-1204. The disordered stretch occupies residues 1501 to 1524; the sequence is EAVEAKERPAARRGVKREQPGKQA.

This sequence belongs to the RNA polymerase beta' chain family. The RNAP catalytic core consists of 2 alpha, 1 beta, 1 beta' and 1 omega subunit. When a sigma factor is associated with the core the holoenzyme is formed, which can initiate transcription. Mg(2+) is required as a cofactor. The cofactor is Zn(2+).

It carries out the reaction RNA(n) + a ribonucleoside 5'-triphosphate = RNA(n+1) + diphosphate. Functionally, DNA-dependent RNA polymerase catalyzes the transcription of DNA into RNA using the four ribonucleoside triphosphates as substrates. The protein is DNA-directed RNA polymerase subunit beta' of Thermus thermophilus (strain ATCC BAA-163 / DSM 7039 / HB27).